The sequence spans 951 residues: Coiled-coil domain-containing protein 15 (951 aa).

Coiled coils occupy residues 64–89 (LIEEELKEQLRKKQEALKHFQKQVKY), 154–193 (DGIEDEENQNELFQQQAQALSETMKQARHRLASFKTVIKK), 782–813 (MDIEREQVKEQQRQKEQKKKIEKIKKKREQEC), and 839–874 (LAQLQLQEIKGTREKQQREKEYLRYVEALRAQIQEK).

As to quaternary structure, interacts with POC5, POC1B, CETN2 and FAM161A.

The protein resides in the cytoplasm. Its subcellular location is the cytoskeleton. The protein localises to the microtubule organizing center. It is found in the centrosome. It localises to the centriole. The protein resides in the centriolar satellite. Its function is as follows. Plays an important role in primary cilium assembly, maintenance, and length regulation. Interacts with centriole inner scaffold proteins to promote proper centriole size and integrity and assembly of functional cilia. Required for the recruitment of both the inner scaffold protein POC1B and the distal SFI1/CETN2 complex to centrioles. In Homo sapiens (Human), this protein is Coiled-coil domain-containing protein 15 (CCDC15).